The chain runs to 434 residues: MAATDIARQVGEGCRTVPLAGHVGFDSLPDQLVNKSVSQGFCFNILCVGETGLGKSTLMDTLFNTKFEGEPATHTQPGVQLQSNTYDLQESNVRLKLTIVSTVGFGDQINKEDSYKPIVEFIDAQFEAYLQEELKIRRVLHTYHDSRIHVCLYFIAPTGHSLKSLDLVTMKKLDSKVNIIPIIAKADAISKSELTKFKIKITSELVSNGVQIYQFPTDDESVAEINGTMNAHLPFAVIGSTEELKIGNKMMRARQYPWGTVQVENEAHCDFVKLREMLIRVNMEDLREQTHTRHYELYRRCKLEEMGFKDTDPDSKPFSLQETYEAKRNEFLGELQKKEEEMRQMFVQRVKEKEAELKEAEKELHEKFDRLKKLHQDEKKKLEDKKKSLDDEVNAFKQRKTAAELLQSQGSQAGGSQTLKRDKEKKNNPWLCTE.

Position 2 is an N-acetylalanine (Ala2). Ser27 is modified (phosphoserine). Positions 39–305 (QGFCFNILCV…ELYRRCKLEE (267 aa)) constitute a Septin-type G domain. The G1 motif stretch occupies residues 49 to 56 (GETGLGKS). Residues 49-56 (GETGLGKS), Gly104, 185-193 (KADAISKSE), Gly239, and Arg254 contribute to the GTP site. Positions 101 to 104 (STVG) are G3 motif. The interval 184–187 (AKAD) is G4 motif. A coiled-coil region spans residues 321 to 409 (QETYEAKRNE…KTAAELLQSQ (89 aa)). Lys367 is modified (N6-acetyllysine). Residues 405 to 434 (LLQSQGSQAGGSQTLKRDKEKKNNPWLCTE) form a disordered region. Residues 407-417 (QSQGSQAGGSQ) show a composition bias toward low complexity. Position 416 is a phosphoserine (Ser416). Thr418 carries the phosphothreonine modification.

It belongs to the TRAFAC class TrmE-Era-EngA-EngB-Septin-like GTPase superfamily. Septin GTPase family. As to quaternary structure, septins polymerize into heterooligomeric protein complexes that form filaments, and associate with cellular membranes, actin filaments and microtubules. GTPase activity is required for filament formation. Filaments are assembled from asymmetrical heterotrimers, composed of SEPTIN2, SEPTIN6 and SEPTIN7 that associate head-to-head to form a hexameric unit. Within the trimer, directly interacts with SEPTIN2 and SEPTIN7. Also interacts with SEPTIN9 and SEPTIN12. Interaction with SEPTIN12 alters filament structure. Component of a septin core octameric complex consisting of SEPTIN12, SEPTIN7, SEPTIN6 and SEPTIN2 or SEPTIN4 in the order 12-7-6-2-2-6-7-12 or 12-7-6-4-4-6-7-12 and located in the sperm annulus. Interacts with SOCS7. Interacts with HNRNPA1. In terms of assembly, (Microbial infection) Interacts with HCV NS5B. Widely expressed.

The protein resides in the cytoplasm. It is found in the cytoskeleton. The protein localises to the spindle. It localises to the chromosome. Its subcellular location is the centromere. The protein resides in the kinetochore. It is found in the cleavage furrow. The protein localises to the midbody. It localises to the cell projection. Its subcellular location is the cilium. The protein resides in the flagellum. In terms of biological role, filament-forming cytoskeletal GTPase. Required for normal organization of the actin cytoskeleton. Involved in cytokinesis. May play a role in HCV RNA replication. Forms a filamentous structure with SEPTIN12, SEPTIN6, SEPTIN2 and probably SEPTIN4 at the sperm annulus which is required for the structural integrity and motility of the sperm tail during postmeiotic differentiation. The polypeptide is Septin-6 (Homo sapiens (Human)).